Here is a 306-residue protein sequence, read N- to C-terminus: tRNA pseudouridine synthase B (306 aa).

Catalysis depends on Asp-43, which acts as the Nucleophile.

It belongs to the pseudouridine synthase TruB family. Type 1 subfamily.

The catalysed reaction is uridine(55) in tRNA = pseudouridine(55) in tRNA. In terms of biological role, responsible for synthesis of pseudouridine from uracil-55 in the psi GC loop of transfer RNAs. The sequence is that of tRNA pseudouridine synthase B from Syntrophobacter fumaroxidans (strain DSM 10017 / MPOB).